Reading from the N-terminus, the 374-residue chain is tRNA (guanine(26)-N(2))-dimethyltransferase (374 aa).

In terms of domain architecture, Trm1 methyltransferase spans 4–368 (IEATEGTTTF…APLPVLYDAI (365 aa)). Positions 41, 66, 82, 108, and 109 each coordinate S-adenosyl-L-methionine. Zn(2+) contacts are provided by Cys-237, Cys-240, Cys-256, and Cys-259.

Belongs to the class I-like SAM-binding methyltransferase superfamily. Trm1 family.

The catalysed reaction is guanosine(26) in tRNA + 2 S-adenosyl-L-methionine = N(2)-dimethylguanosine(26) in tRNA + 2 S-adenosyl-L-homocysteine + 2 H(+). In terms of biological role, dimethylates a single guanine residue at position 26 of a number of tRNAs using S-adenosyl-L-methionine as donor of the methyl groups. This Methanoregula boonei (strain DSM 21154 / JCM 14090 / 6A8) protein is tRNA (guanine(26)-N(2))-dimethyltransferase.